Consider the following 227-residue polypeptide: AN1-type zinc finger protein 3 (227 aa).

The A20-type zinc finger occupies 12-44; that stretch reads PSLPPRCPCGFWGSSKTMNLCSKCFADFQKKQP. Zn(2+)-binding residues include Cys-18, Cys-20, Cys-32, and Cys-35. 2 disordered regions span residues 41–99 and 113–151; these read KKQP…TEEC and PTKR…RSKQ. Low complexity-rich tracts occupy residues 49–59 and 66–77; these read TPSTSNSQSDL and SDNNNTSVTTPT. Composition is skewed to polar residues over residues 78–96 and 113–127; these read LSPS…SPST and PTKR…SENE. Basic and acidic residues predominate over residues 135–148; it reads RLVENPERPEESGR. The AN1-type zinc finger occupies 151–200; that stretch reads QKSRRRCFQCQTKLELVQQELGSCRCGYVFCMLHRLPEQHDCTFDHMGRG. Zn(2+) is bound by residues Cys-157, Cys-160, Cys-174, Cys-176, Cys-181, His-184, His-190, and Cys-192.

As to expression, expressed in testis.

In Mus musculus (Mouse), this protein is AN1-type zinc finger protein 3 (Zfand3).